We begin with the raw amino-acid sequence, 880 residues long: EP-cadherin (880 aa).

The signal sequence occupies residues 1–28; the sequence is MGSTRLRNASVWLCGLLCLLQVVPSINA. The propeptide occupies 29 to 155; the sequence is DVSGCKPGFS…THTGLKRKKR (127 aa). N61 is a glycosylation site (N-linked (GlcNAc...) asparagine). 5 Cadherin domains span residues 156 to 263, 264 to 376, 377 to 487, 488 to 593, and 594 to 704; these read DWVI…RPKF, TQDV…APIF, DPKT…APFF, VPAV…DNGP, and VPSP…GFDL. At 156–703 the chain is on the extracellular side; the sequence is DWVIPPIKVS…CQEKLVGGFD (548 aa). O-linked (GalNAc...) threonine glycans are attached at residues T343, T382, and T400. The N-linked (GlcNAc...) asparagine glycan is linked to N425. Residues T428, T469, T471, T473, and T475 are each glycosylated (O-linked (GalNAc...) threonine). N-linked (GlcNAc...) asparagine glycosylation is present at N558. T562, T576, T578, and T580 each carry an O-linked (GalNAc...) threonine glycan. Intrachain disulfides connect C603/C687 and C685/C694. N-linked (GlcNAc...) asparagine glycosylation is present at N681. The helical transmembrane segment at 704-728 threads the bilayer; it reads LPIILVILGSVLALLILFLLLLLFL. Over 729–880 the chain is Cytoplasmic; the sequence is KRKKVVKEPL…DMYGGDDDEE (152 aa). The tract at residues 790-826 is disordered; it reads PAPHYRPRPSNPDEIGNFIDENLDAADNDPTAPPYDS.

Interacts with CTNNB1.

The protein resides in the cell membrane. Functionally, cadherins are calcium-dependent cell adhesion proteins. They preferentially interact with themselves in a homophilic manner in connecting cells; cadherins may thus contribute to the sorting of heterogeneous cell types. This Xenopus laevis (African clawed frog) protein is EP-cadherin.